We begin with the raw amino-acid sequence, 509 residues long: MEEIQRYLQPERSQQHDFLYPLIFQEYIYAFAYDRGFSRSILSENPGYDNKSSLLIVKRLITGMYQQNHFLISPNDSNQNPFGARNKNLYFPIISEGFAFIVEIPFSLRLISCLEGKKIVKSQNLRSIHSIFPFLEDNFSHLNFVLDILIPQPVHVEILVQTLHYWVKDASSLHLLRFFLNEYCNWNSLITPNKASSSFSKRNQRLFLFLYNSHVYEYESIFVFLRNQSSHLRSTSSGVLLERIFFYGKIERLVNVFVKVKDFQANLWLVKEPCMHYIRYQRKSILASKGTALFMNKWKCYLVTFWQWHFSLWFHPRRISINQLSNHSLEFLGYLSSVRMNASVVRSQIIENSFLINNAIKKFDTFVPIIPLIASLAKAKFCNVLGHPISKPVRADLSDSNIIDRFGRICRNLSHYHSGSSKKKSLYRIKYILRLSCARTLARKHKSTVRAFLKRLGSELLEEFLMSEEDVLFLTFPKASSTLRGVYRSRIWYLDIISINDLANHKSKF.

This sequence belongs to the intron maturase 2 family. MatK subfamily.

The protein resides in the plastid. The protein localises to the chloroplast. In terms of biological role, usually encoded in the trnK tRNA gene intron. Probably assists in splicing its own and other chloroplast group II introns. The sequence is that of Maturase K from Jacaranda mimosifolia (Jacaranda).